Here is a 453-residue protein sequence, read N- to C-terminus: Zinc finger CCCH domain-containing protein 26 (453 aa).

A compositionally biased stretch (polar residues) spans 1-15 (MSETQQQVQNSTGSI). The tract at residues 1-47 (MSETQQQVQNSTGSIRSPDKIEDTFRRMKVNEDNMEQSSPYPDRPGE) is disordered. An N-acetylserine modification is found at serine 2. A compositionally biased stretch (basic and acidic residues) spans 17-32 (SPDKIEDTFRRMKVNE). C3H1-type zinc fingers lie at residues 44-72 (RPGE…HPLT), 95-112 (ETGA…HPKD), 129-157 (RQGE…HPHP), 261-289 (FSER…HPKE), and 307-335 (RPGQ…HSML). Positions 360–379 (STNLRISSPPSPSDMTTLSN) are enriched in polar residues. Positions 360-453 (STNLRISSPP…KVQDSSDKST (94 aa)) are disordered. Residues 391 to 407 (ETEKQDDSPTEPEKSEV) show a composition bias toward basic and acidic residues. Positions 413–422 (PNGSDSTSLP) are enriched in polar residues. Residues 441–453 (DSSKVQDSSDKST) are compositionally biased toward basic and acidic residues.

It is found in the nucleus. The chain is Zinc finger CCCH domain-containing protein 26 (ZFN2) from Arabidopsis thaliana (Mouse-ear cress).